Reading from the N-terminus, the 408-residue chain is Peptidase T (408 aa).

Histidine 78 contributes to the Zn(2+) binding site. Aspartate 80 is an active-site residue. Aspartate 141 is a Zn(2+) binding site. Glutamate 175 (proton acceptor) is an active-site residue. Zn(2+)-binding residues include glutamate 176, aspartate 198, and histidine 380.

Belongs to the peptidase M20B family. Zn(2+) is required as a cofactor.

The protein resides in the cytoplasm. It catalyses the reaction Release of the N-terminal residue from a tripeptide.. Cleaves the N-terminal amino acid of tripeptides. This chain is Peptidase T, found in Halothermothrix orenii (strain H 168 / OCM 544 / DSM 9562).